Reading from the N-terminus, the 81-residue chain is Large ribosomal subunit protein bL31B (81 aa).

The protein belongs to the bacterial ribosomal protein bL31 family. Type B subfamily. As to quaternary structure, part of the 50S ribosomal subunit.

This chain is Large ribosomal subunit protein bL31B, found in Bacillus cereus (strain ATCC 10987 / NRS 248).